The following is a 207-amino-acid chain: Small ribosomal subunit protein uS4 (207 aa).

Residues 30-53 are disordered; it reads DKSKFDTKPGQHGRTSGQRTSDFG. The segment covering 42-52 has biased composition (polar residues); the sequence is GRTSGQRTSDF. The 61-residue stretch at 97–157 folds into the S4 RNA-binding domain; the sequence is SRLDNVVYRM…EKSKKQARIV (61 aa).

It belongs to the universal ribosomal protein uS4 family. In terms of assembly, part of the 30S ribosomal subunit. Contacts protein S5. The interaction surface between S4 and S5 is involved in control of translational fidelity.

Its function is as follows. One of the primary rRNA binding proteins, it binds directly to 16S rRNA where it nucleates assembly of the body of the 30S subunit. Functionally, with S5 and S12 plays an important role in translational accuracy. This chain is Small ribosomal subunit protein uS4, found in Delftia acidovorans (strain DSM 14801 / SPH-1).